Reading from the N-terminus, the 952-residue chain is Protein translocase subunit SecA (952 aa).

Residues glutamine 104, 122 to 126, and aspartate 512 contribute to the ATP site; that span reads GEGKT.

This sequence belongs to the SecA family. In terms of assembly, monomer and homodimer. Part of the essential Sec protein translocation apparatus which comprises SecA, SecYEG and auxiliary proteins SecDF. Other proteins may also be involved.

Its subcellular location is the cell inner membrane. It is found in the cytoplasm. It carries out the reaction ATP + H2O + cellular proteinSide 1 = ADP + phosphate + cellular proteinSide 2.. Part of the Sec protein translocase complex. Interacts with the SecYEG preprotein conducting channel. Has a central role in coupling the hydrolysis of ATP to the transfer of proteins into and across the cell membrane, serving as an ATP-driven molecular motor driving the stepwise translocation of polypeptide chains across the membrane. This Gloeobacter violaceus (strain ATCC 29082 / PCC 7421) protein is Protein translocase subunit SecA.